We begin with the raw amino-acid sequence, 95 residues long: Aspartyl/glutamyl-tRNA(Asn/Gln) amidotransferase subunit C (95 aa).

Belongs to the GatC family. Heterotrimer of A, B and C subunits.

It carries out the reaction L-glutamyl-tRNA(Gln) + L-glutamine + ATP + H2O = L-glutaminyl-tRNA(Gln) + L-glutamate + ADP + phosphate + H(+). It catalyses the reaction L-aspartyl-tRNA(Asn) + L-glutamine + ATP + H2O = L-asparaginyl-tRNA(Asn) + L-glutamate + ADP + phosphate + 2 H(+). In terms of biological role, allows the formation of correctly charged Asn-tRNA(Asn) or Gln-tRNA(Gln) through the transamidation of misacylated Asp-tRNA(Asn) or Glu-tRNA(Gln) in organisms which lack either or both of asparaginyl-tRNA or glutaminyl-tRNA synthetases. The reaction takes place in the presence of glutamine and ATP through an activated phospho-Asp-tRNA(Asn) or phospho-Glu-tRNA(Gln). This chain is Aspartyl/glutamyl-tRNA(Asn/Gln) amidotransferase subunit C, found in Brucella anthropi (strain ATCC 49188 / DSM 6882 / CCUG 24695 / JCM 21032 / LMG 3331 / NBRC 15819 / NCTC 12168 / Alc 37) (Ochrobactrum anthropi).